We begin with the raw amino-acid sequence, 213 residues long: A-type ATP synthase subunit D (213 aa).

This sequence belongs to the V-ATPase D subunit family. As to quaternary structure, has multiple subunits with at least A(3), B(3), C, D, E, F, H, I and proteolipid K(x).

It localises to the cell membrane. In terms of biological role, component of the A-type ATP synthase that produces ATP from ADP in the presence of a proton gradient across the membrane. The sequence is that of A-type ATP synthase subunit D from Saccharolobus solfataricus (strain ATCC 35092 / DSM 1617 / JCM 11322 / P2) (Sulfolobus solfataricus).